Here is a 277-residue protein sequence, read N- to C-terminus: Urease accessory protein UreD (277 aa).

This sequence belongs to the UreD family. UreD, UreF and UreG form a complex that acts as a GTP-hydrolysis-dependent molecular chaperone, activating the urease apoprotein by helping to assemble the nickel containing metallocenter of UreC. The UreE protein probably delivers the nickel.

The protein localises to the cytoplasm. In terms of biological role, required for maturation of urease via the functional incorporation of the urease nickel metallocenter. The protein is Urease accessory protein UreD of Flavobacterium johnsoniae (strain ATCC 17061 / DSM 2064 / JCM 8514 / BCRC 14874 / CCUG 350202 / NBRC 14942 / NCIMB 11054 / UW101) (Cytophaga johnsonae).